The chain runs to 353 residues: Fe(3+) ions import ATP-binding protein FbpC (353 aa).

The 231-residue stretch at 9 to 239 (VTFENVTKKF…PASAFIADFM (231 aa)) folds into the ABC transporter domain. 41–48 (GPSGCGKT) is an ATP binding site.

Belongs to the ABC transporter superfamily. Fe(3+) ion importer (TC 3.A.1.10) family. In terms of assembly, the complex is composed of two ATP-binding proteins (FbpC), two transmembrane proteins (FbpB) and a solute-binding protein (FbpA).

It is found in the cell inner membrane. It catalyses the reaction Fe(3+)(out) + ATP + H2O = Fe(3+)(in) + ADP + phosphate + H(+). In terms of biological role, part of the ABC transporter complex FbpABC involved in Fe(3+) ions import. Responsible for energy coupling to the transport system. The polypeptide is Fe(3+) ions import ATP-binding protein FbpC (Brucella abortus (strain 2308)).